Here is a 430-residue protein sequence, read N- to C-terminus: T-kininogen 2 (430 aa).

The first 18 residues, 1–18 (MKLITILLLCSRLLPSLA), serve as a signal peptide directing secretion. Gln-19 is subject to Pyrrolidone carboxylic acid. Residues 28 to 131 (CNDETVFQAV…TQICNITPGK (104 aa)) enclose the Cystatin kininogen-type 1 domain. Disulfide bonds link Cys-28-Cys-404, Cys-83-Cys-94, Cys-107-Cys-125, Cys-141-Cys-144, Cys-205-Cys-217, Cys-228-Cys-247, Cys-263-Cys-266, Cys-327-Cys-339, and Cys-350-Cys-369. Residue Asn-82 is glycosylated (N-linked (GlcNAc...) asparagine). One can recognise a Cystatin kininogen-type 2 domain in the interval 150–253 (MDSSDLKPVL…SQSCDLYPGD (104 aa)). Asn-168 and Asn-204 each carry an N-linked (GlcNAc...) asparagine glycan. Positions 272-375 (VDSPELKEAL…TVRCQALDMM (104 aa)) constitute a Cystatin kininogen-type 3 domain. N-linked (GlcNAc...) asparagine glycosylation occurs at Asn-326. The tract at residues 410-430 (LSKAGAGPAPDHQAEASTVTP) is disordered.

In terms of processing, as T-kinin is preceded by a Met instead of an Arg or Lys, it is not released from its precursor by either tissue or plasma kallikrein. As to expression, plasma.

The protein resides in the secreted. It is found in the extracellular space. Functionally, kininogens are plasma glycoproteins with a number of functions: (1) as precursor of the active peptide bradykinin they effect smooth muscle contraction, induction of hypotension and increase of vascular permeability. (2) They play a role in blood coagulation by helping to position optimally prekallikrein and factor XI next to factor XII. (3) They are inhibitor of thiol proteases. The chain is T-kininogen 2 from Rattus norvegicus (Rat).